A 117-amino-acid chain; its full sequence is Protein Wnt-6 (117 aa).

Ser1 carries the O-palmitoleoyl serine; by PORCN lipid modification. Cys83 and Cys98 are joined by a disulfide. N-linked (GlcNAc...) asparagine glycosylation occurs at Asn84.

It belongs to the Wnt family. Post-translationally, palmitoleoylation is required for efficient binding to frizzled receptors. Depalmitoleoylation leads to Wnt signaling pathway inhibition.

The protein resides in the secreted. The protein localises to the extracellular space. Its subcellular location is the extracellular matrix. Ligand for members of the frizzled family of seven transmembrane receptors. Probable developmental protein. May be a signaling molecule which affects the development of discrete regions of tissues. Is likely to signal over only few cell diameters. This chain is Protein Wnt-6 (WNT-6), found in Plethodon jordani (Red-cheeked salamander).